We begin with the raw amino-acid sequence, 173 residues long: Aliphatic sulfonate oxidoreductase, polyferredoxin-like subunit (173 aa).

3 4Fe-4S ferredoxin-type domains span residues 9-40 (IWIL…WPEA), 48-80 (LFPG…VDEK), and 82-111 (GAVV…IPAG). Positions 18, 21, 24, 28, 58, 61, 66, 70, 91, 94, 97, 101, 118, 121, 127, and 131 each coordinate [4Fe-4S] cluster.

Heterodimer composed of a small WOR5-S subunit, with four [4Fe-4S] clusters, and a large WOR5-L subunit, containing the active site tungsto-bispyranopterin cofactor as well as another [4Fe-4S] cluster. [4Fe-4S] cluster serves as cofactor.

It is found in the cytoplasm. In terms of biological role, polyferredoxin-like subunit of an oxidoreductase that can desulfonate and oxidize aliphatic sulfonates such as taurine. May serve as a an electron-transfer subunit between the catalytic subunit and ferredoxin. The chain is Aliphatic sulfonate oxidoreductase, polyferredoxin-like subunit from Pyrococcus furiosus (strain ATCC 43587 / DSM 3638 / JCM 8422 / Vc1).